A 750-amino-acid chain; its full sequence is Photosystem I P700 chlorophyll a apoprotein A1 (750 aa).

A run of 8 helical transmembrane segments spans residues 70–93 (VFSA…FHGA), 156–179 (LYCT…FHYH), 195–219 (LNHH…HVSL), 291–309 (TAHH…GHMY), 346–369 (WHAQ…HHMY), 385–411 (LSLF…IFMV), 433–455 (AIIS…LYIH), and 531–549 (FLVH…LILL). Residues cysteine 573 and cysteine 582 each contribute to the [4Fe-4S] cluster site. 2 consecutive transmembrane segments (helical) span residues 589-610 (HVFL…HFSW) and 664-686 (LSAY…MFLF). Histidine 675 is a binding site for chlorophyll a'. Chlorophyll a-binding residues include methionine 683 and tyrosine 691. Residue tryptophan 692 participates in phylloquinone binding. Residues 724-744 (AVGVAHYLLGGIATTWAFFLA) form a helical membrane-spanning segment.

Belongs to the PsaA/PsaB family. In terms of assembly, the PsaA/B heterodimer binds the P700 chlorophyll special pair and subsequent electron acceptors. PSI consists of a core antenna complex that captures photons, and an electron transfer chain that converts photonic excitation into a charge separation. The eukaryotic PSI reaction center is composed of at least 11 subunits. It depends on P700 is a chlorophyll a/chlorophyll a' dimer, A0 is one or more chlorophyll a, A1 is one or both phylloquinones and FX is a shared 4Fe-4S iron-sulfur center. as a cofactor.

The protein resides in the plastid. Its subcellular location is the chloroplast thylakoid membrane. It carries out the reaction reduced [plastocyanin] + hnu + oxidized [2Fe-2S]-[ferredoxin] = oxidized [plastocyanin] + reduced [2Fe-2S]-[ferredoxin]. Its function is as follows. PsaA and PsaB bind P700, the primary electron donor of photosystem I (PSI), as well as the electron acceptors A0, A1 and FX. PSI is a plastocyanin-ferredoxin oxidoreductase, converting photonic excitation into a charge separation, which transfers an electron from the donor P700 chlorophyll pair to the spectroscopically characterized acceptors A0, A1, FX, FA and FB in turn. Oxidized P700 is reduced on the lumenal side of the thylakoid membrane by plastocyanin. The sequence is that of Photosystem I P700 chlorophyll a apoprotein A1 from Angiopteris evecta (Mule's foot fern).